The chain runs to 231 residues: Large ribosomal subunit protein uL1 (231 aa).

Belongs to the universal ribosomal protein uL1 family. As to quaternary structure, part of the 50S ribosomal subunit.

Binds directly to 23S rRNA. The L1 stalk is quite mobile in the ribosome, and is involved in E site tRNA release. In terms of biological role, protein L1 is also a translational repressor protein, it controls the translation of the L11 operon by binding to its mRNA. This is Large ribosomal subunit protein uL1 from Mycoplasmopsis agalactiae (strain NCTC 10123 / CIP 59.7 / PG2) (Mycoplasma agalactiae).